Consider the following 144-residue polypeptide: Granulocyte-macrophage colony-stimulating factor (144 aa).

A signal peptide spans 1-17 (MWLQNLLFLNTVVCSIS). Residues serine 22 and serine 24 are each glycosylated (O-linked (GalNAc...) serine). The O-linked (GalNAc...) threonine glycan is linked to threonine 27. Residues asparagine 44, asparagine 45, and asparagine 54 are each glycosylated (N-linked (GlcNAc...) asparagine). 2 disulfides stabilise this stretch: cysteine 71–cysteine 113 and cysteine 105–cysteine 138.

Belongs to the GM-CSF family. As to quaternary structure, monomer. The signaling GM-CSF receptor complex is a dodecamer of two head-to-head hexamers of two alpha, two beta, and two ligand subunits.

It localises to the secreted. Its function is as follows. Cytokine that stimulates the growth and differentiation of hematopoietic precursor cells from various lineages, including granulocytes, macrophages, eosinophils and erythrocytes. In Felis catus (Cat), this protein is Granulocyte-macrophage colony-stimulating factor (CSF2).